The chain runs to 87 residues: Protein anon-73B1 (87 aa).

The helical transmembrane segment at 25–47 (LLIRYGLYVGALFQFVCISAAVL) threads the bilayer. The tract at residues 51–87 (NPDGQSNPESGEVTEREGEPVRTRLHKIRKLEKKKRR) is disordered. The segment covering 63–72 (VTEREGEPVR) has biased composition (basic and acidic residues). A compositionally biased stretch (basic residues) spans 73-87 (TRLHKIRKLEKKKRR).

This sequence belongs to the UPF0239 family.

It localises to the membrane. This Drosophila melanogaster (Fruit fly) protein is Protein anon-73B1 (anon-73B1).